The primary structure comprises 314 residues: Nitrilase 2 (314 aa).

The 263-residue stretch at 7 to 269 folds into the CN hydrolase domain; the sequence is VTLGVAQAAP…ETLITARVST (263 aa). Glutamate 47 (proton acceptor) is an active-site residue. Residue lysine 132 is the Proton donor of the active site. The active-site Nucleophile is cysteine 166.

It belongs to the carbon-nitrogen hydrolase superfamily. Nitrilase family.

The enzyme catalyses a nitrile + 2 H2O = a carboxylate + NH4(+). Its function is as follows. Nitrilases catalyze the mild hydrolytic conversion of organonitriles directly to the corresponding carboxylic acids. Catalyzes the production of aryllactic acid derivatives. Mediates the hydrolysis of cyanohydrin to (S)-phenyllactic acid. This is Nitrilase 2 from Unknown prokaryotic organism.